Here is a 415-residue protein sequence, read N- to C-terminus: Queuine tRNA-ribosyltransferase accessory subunit 2 (415 aa).

Zn(2+) is bound by residues Cys351, Cys353, Cys356, and His382.

Belongs to the queuine tRNA-ribosyltransferase family. QTRT2 subfamily. Heterodimer of a catalytic subunit qtrt1 and an accessory subunit qtrt2. Requires Zn(2+) as cofactor.

The protein resides in the cytoplasm. It localises to the mitochondrion outer membrane. Functionally, non-catalytic subunit of the queuine tRNA-ribosyltransferase (TGT) that catalyzes the base-exchange of a guanine (G) residue with queuine (Q) at position 34 (anticodon wobble position) in tRNAs with GU(N) anticodons (tRNA-Asp, -Asn, -His and -Tyr), resulting in the hypermodified nucleoside queuosine (7-(((4,5-cis-dihydroxy-2-cyclopenten-1-yl)amino)methyl)-7-deazaguanosine). The chain is Queuine tRNA-ribosyltransferase accessory subunit 2 from Xenopus laevis (African clawed frog).